The primary structure comprises 86 residues: Immunity protein CdiI-1 (86 aa).

Interacts with the C-terminal fragment (CT) of cognate toxin protein CdiA-EC869.

Immunity protein component of a toxin-immunity protein module, which functions as a cellular contact-dependent growth inhibition (CDI) system. CDI modules allow bacteria to communicate with and inhibit the growth of closely related neighboring bacteria in a contact-dependent fashion. Neutralizes the toxic activity of cognate toxin CdiA-EC869 (the C-terminal 289 residue CT fragment). Does not inhibit toxic activity of CdiA from other toxin-immunity modules or strains of E.coli. The chain is Immunity protein CdiI-1 from Escherichia coli O157:H7 (strain EC869).